The chain runs to 637 residues: Protein arginine N-methyltransferase 5 (637 aa).

Ala-2 is modified (N-acetylalanine). Residues 13-292 (RVSSGRDLNC…YLEYLSQNRP (280 aa)) are TIM barrel. One can recognise an SAM-dependent MTase PRMT-type domain in the interval 308–615 (LQSPLQPLMD…SNSKKVWYEW (308 aa)). S-adenosyl-L-methionine is bound at residue Tyr-324. Residue Phe-327 participates in a protein binding. Residues 333-334 (KY), Glu-392, and 419-420 (DM) contribute to the S-adenosyl-L-methionine site. A protein contacts are provided by Glu-435 and Glu-444. Active-site proton donor/acceptor residues include Glu-435 and Glu-444. Positions 465–637 (PGEYTSFLAP…PTGRSYTIGL (173 aa)) are beta barrel. The interval 488-494 (REKDRDP) is dimerization.

Belongs to the class I-like SAM-binding methyltransferase superfamily. Protein arginine N-methyltransferase family. In terms of assembly, forms, at least, homodimers and homotetramers. Component of the methylosome complex, composed of PRMT5, WDR77 and CLNS1A. Found in a complex composed of PRMT5, WDR77 and RIOK1. RIOK1 and CLNS1A associate with PRMT5 in a mutually exclusive fashion, which allows the recruitment of distinct methylation substrates, such as nucleolin/NCL and Sm proteins, respectively. Interacts with PRDM1. Identified in a complex composed of methylosome and PRMT1 and ERH. Interacts with EGFR; methylates EGFR and stimulates EGFR-mediated ERK activation. Interacts with HOXA9. Interacts with SRGAP2. Found in a complex with COPRS, RUNX1 and CBFB. Interacts with CHTOP; the interaction symmetrically methylates CHTOP, but seems to require the presence of PRMT1. Interacts with EPB41L3; this modulates methylation of target proteins. Component of a high molecular weight E2F-pocket protein complex, CERC (cyclin E1 repressor complex). Associates with SWI/SNF remodeling complexes containing SMARCA2 and SMARCA4. Interacts with JAK2, SSTR1, SUPT5H, BRAF and with active RAF1. Interacts with LSM11, PRMT7 and SNRPD3. Interacts with COPRS; promoting its recruitment on histone H4. Interacts with CLNS1A/pICln. Identified in a complex with CLNS1A/pICln and Sm proteins. Interacts with RPS10. Interacts with WDR77. Interacts with IWS1. Interacts with CRY1. Interacts with POLR2A. Interacts with SMN1/SMN2. Interacts with LYAR; this interaction is direct. Interacts with TTC5/STRAP; this interaction is DNA damage-dependent and promotes PRMT5 interaction with p53/TP53. Interacts with p53/TP53 in response to DNA damage; the interaction is TTC5/STRAP dependent. Interacts with FAM47E; the interaction is direct, promotes PRMT5 localization to chromatin, and does not disrupt its association with WDR77 or STUB1. Interacts with TDRD6. Interacts with STUB1. Interacts with MBD2. Does not interact with MBD3.

Its subcellular location is the cytoplasm. The protein localises to the nucleus. It localises to the golgi apparatus. It carries out the reaction L-arginyl-[protein] + 2 S-adenosyl-L-methionine = N(omega),N(omega)'-dimethyl-L-arginyl-[protein] + 2 S-adenosyl-L-homocysteine + 2 H(+). Its activity is regulated as follows. Activity is increased by EGF, HGF, FGF1 or FGF2 treatments, and slightly decreased by NGF treatment. In terms of biological role, arginine methyltransferase that can both catalyze the formation of omega-N monomethylarginine (MMA) and symmetrical dimethylarginine (sDMA), with a preference for the formation of MMA. Specifically mediates the symmetrical dimethylation of arginine residues in the small nuclear ribonucleoproteins Sm D1 (SNRPD1) and Sm D3 (SNRPD3); such methylation being required for the assembly and biogenesis of snRNP core particles. Methylates SUPT5H and may regulate its transcriptional elongation properties. May methylate the N-terminal region of MBD2. Mono- and dimethylates arginine residues of myelin basic protein (MBP) in vitro. May play a role in cytokine-activated transduction pathways. Negatively regulates cyclin E1 promoter activity and cellular proliferation. Methylates histone H2A and H4 'Arg-3' during germ cell development. Methylates histone H3 'Arg-8', which may repress transcription. Methylates the Piwi proteins (PIWIL1, PIWIL2 and PIWIL4), methylation of Piwi proteins being required for the interaction with Tudor domain-containing proteins and subsequent localization to the meiotic nuage. Methylates RPS10. Attenuates EGF signaling through the MAPK1/MAPK3 pathway acting at 2 levels. First, monomethylates EGFR; this enhances EGFR 'Tyr-1197' phosphorylation and PTPN6 recruitment, eventually leading to reduced SOS1 phosphorylation. Second, methylates RAF1 and probably BRAF, hence destabilizing these 2 signaling proteins and reducing their catalytic activity. Required for induction of E-selectin and VCAM-1, on the endothelial cells surface at sites of inflammation. Methylates HOXA9. Methylates and regulates SRGAP2 which is involved in cell migration and differentiation. Acts as a transcriptional corepressor in CRY1-mediated repression of the core circadian component PER1 by regulating the H4R3 dimethylation at the PER1 promoter. Methylates GM130/GOLGA2, regulating Golgi ribbon formation. Methylates H4R3 in genes involved in glioblastomagenesis in a CHTOP- and/or TET1-dependent manner. Symmetrically methylates POLR2A, a modification that allows the recruitment to POLR2A of proteins including SMN1/SMN2 and SETX. This is required for resolving RNA-DNA hybrids created by RNA polymerase II, that form R-loop in transcription terminal regions, an important step in proper transcription termination. Along with LYAR, binds the promoter of gamma-globin HBG1/HBG2 and represses its expression. Symmetrically methylates NCL. Methylates p53/TP53; methylation might possibly affect p53/TP53 target gene specificity. Involved in spliceosome maturation and mRNA splicing in prophase I spermatocytes through the catalysis of the symmetrical arginine dimethylation of SNRPB (small nuclear ribonucleoprotein-associated protein) and the interaction with tudor domain-containing protein TDRD6. The protein is Protein arginine N-methyltransferase 5 (Prmt5) of Mus musculus (Mouse).